A 404-amino-acid chain; its full sequence is Protein IQ-DOMAIN 12 (404 aa).

Residues 8–25 (FGWMKRLFICEAKARAEK) form a calmodulin-binding region. The Nuclear localization signal 1 signature appears at 11 to 18 (MKRLFICE). 2 IQ domains span residues 108–135 (NVAAIKIQSAFRASLARKALRALKALVR) and 136–158 (LQAIVRGRAVRRKVSALLKSSHS). Positions 226 to 233 (IKRDRMLK) match the Nuclear localization signal 2 motif.

The protein belongs to the IQD family. Binds to multiple calmodulin (CaM) in the presence of Ca(2+) and CaM-like proteins.

Its subcellular location is the nucleus. The protein localises to the cell membrane. In terms of biological role, may be involved in cooperative interactions with calmodulins or calmodulin-like proteins. Recruits calmodulin proteins to microtubules, thus being a potential scaffold in cellular signaling and trafficking. May associate with nucleic acids and regulate gene expression at the transcriptional or post-transcriptional level. The chain is Protein IQ-DOMAIN 12 from Arabidopsis thaliana (Mouse-ear cress).